Here is a 341-residue protein sequence, read N- to C-terminus: Cyclin-Y (341 aa).

The N-myristoyl glycine moiety is linked to residue Gly-2. Phosphoserine occurs at positions 21 and 25. Thr-30 is subject to Phosphothreonine. Position 33 is a phosphoserine (Ser-33). Phosphothreonine is present on Thr-37. Residue Thr-67 is modified to Phosphothreonine; by CDK14. A phosphoserine; by CDK14 mark is found at Ser-71 and Ser-73. Position 75 is a phosphothreonine (Thr-75). A Phosphoserine; by CDK14 modification is found at Ser-83. Ser-99, Ser-100, and Ser-102 each carry phosphoserine. One can recognise a Cyclin N-terminal domain in the interval 143–265; it reads DIFDENLHPL…FLELLQFNIN (123 aa). Residue Ser-280 is modified to Phosphoserine. A phosphoserine; by CDK14 mark is found at Ser-288 and Ser-295. Phosphoserine occurs at positions 324 and 326. Phosphothreonine is present on Thr-331.

The protein belongs to the cyclin family. Cyclin Y subfamily. In terms of assembly, found in a complex with CAPRIN2, LRP6 and CDK14 during G2/M stage; CAPRIN2 functions as a scaffold for the complex by binding to CCNY via its N terminus and to CDK14 via its C terminus. Interacts with CDK14. Interacts with CDK16. Interacts with LRP6. In terms of processing, ubiquitinated; leading to its degradation. Post-translationally, heavily phosphorylated. Phosphorylation at Ser-71 and Ser-73 by CDK14 is enhanced during the G2 and M cell cycle phases, and creates a phosphodegron triggering SCF-dependent ubiquitination. In terms of tissue distribution, widely expressed.

Its subcellular location is the cell membrane. The protein localises to the nucleus. Its function is as follows. Positive regulatory subunit of the cyclin-dependent kinases CDK14/PFTK1 and CDK16. Acts as a cell-cycle regulator of Wnt signaling pathway during G2/M phase by recruiting CDK14/PFTK1 to the plasma membrane and promoting phosphorylation of LRP6, leading to the activation of the Wnt signaling pathway. Recruits CDK16 to the plasma membrane. Isoform 3 might play a role in the activation of MYC-mediated transcription. This chain is Cyclin-Y (CCNY), found in Homo sapiens (Human).